We begin with the raw amino-acid sequence, 408 residues long: Acetate kinase (408 aa).

A Mg(2+)-binding site is contributed by asparagine 7. Residue lysine 14 coordinates ATP. Arginine 91 serves as a coordination point for substrate. The active-site Proton donor/acceptor is the aspartate 148. Residues 208-212 (HLGNG), 283-285 (DFR), and 331-335 (GIGEN) contribute to the ATP site. Glutamate 384 provides a ligand contact to Mg(2+).

It belongs to the acetokinase family. As to quaternary structure, homodimer. Mg(2+) is required as a cofactor. Mn(2+) serves as cofactor.

It localises to the cytoplasm. The catalysed reaction is acetate + ATP = acetyl phosphate + ADP. Its pathway is metabolic intermediate biosynthesis; acetyl-CoA biosynthesis; acetyl-CoA from acetate: step 1/2. With respect to regulation, inhibited by diethylpyrocarbonate, hydroxylamine and phenylglyoxal. Catalyzes the formation of acetyl phosphate from acetate and ATP. Can also catalyze the reverse reaction. Can also phosphorylate propionate, but has very low activity toward butyrate. The chain is Acetate kinase from Methanosarcina thermophila.